A 298-amino-acid polypeptide reads, in one-letter code: Ribosomal protein L11 methyltransferase (298 aa).

S-adenosyl-L-methionine is bound by residues Thr139, Gly163, Asp185, and Asn232.

It belongs to the methyltransferase superfamily. PrmA family.

It is found in the cytoplasm. The enzyme catalyses L-lysyl-[protein] + 3 S-adenosyl-L-methionine = N(6),N(6),N(6)-trimethyl-L-lysyl-[protein] + 3 S-adenosyl-L-homocysteine + 3 H(+). Its function is as follows. Methylates ribosomal protein L11. This Microcystis aeruginosa (strain NIES-843 / IAM M-2473) protein is Ribosomal protein L11 methyltransferase.